The primary structure comprises 434 residues: Monodehydroascorbate reductase 1, peroxisomal (434 aa).

Residues 13 to 16 (GGVS), Glu-40, Arg-47, Lys-52, Ile-95, and 146 to 147 (RE) contribute to the FAD site. NAD(+)-binding positions include 171 to 177 (GGYIGLE), Glu-195, Arg-201, and Gly-260. 173–177 (YIGLE) is an NADP(+) binding site. Residues Arg-201 and Gly-260 each coordinate NADP(+). Asp-297 provides a ligand contact to FAD. 313–314 (EH) is an NAD(+) binding site. Residue 313–314 (EH) participates in NADP(+) binding. Val-315 contributes to the FAD binding site. Position 319 (Arg-319) interacts with L-ascorbate. Tyr-348 contacts FAD. Tyr-348 contributes to the NAD(+) binding site. Tyr-348 is an NADP(+) binding site. Arg-350 is an L-ascorbate binding site. Phosphoserine is present on Ser-416.

It belongs to the FAD-dependent oxidoreductase family. It depends on FAD as a cofactor.

Its subcellular location is the peroxisome matrix. It carries out the reaction 2 monodehydro-L-ascorbate radical + NADH + H(+) = 2 L-ascorbate + NAD(+). Catalyzes the conversion of monodehydroascorbate to ascorbate, oxidizing NADH in the process. This Arabidopsis thaliana (Mouse-ear cress) protein is Monodehydroascorbate reductase 1, peroxisomal.